The sequence spans 92 residues: Large ribosomal subunit protein eL43 (92 aa).

The C4-type zinc-finger motif lies at 39 to 60 (CSFCGKKTVRRGAAGIWSCHSC).

It belongs to the eukaryotic ribosomal protein eL43 family.

This is Large ribosomal subunit protein eL43 (RPL43) from Candida glabrata (strain ATCC 2001 / BCRC 20586 / JCM 3761 / NBRC 0622 / NRRL Y-65 / CBS 138) (Yeast).